The primary structure comprises 252 residues: Ribosomal RNA small subunit methyltransferase J (252 aa).

Residues 104–105, 120–121, and Asp-174 each bind S-adenosyl-L-methionine; these read RD and ER.

The protein belongs to the methyltransferase superfamily. RsmJ family.

The protein resides in the cytoplasm. The catalysed reaction is guanosine(1516) in 16S rRNA + S-adenosyl-L-methionine = N(2)-methylguanosine(1516) in 16S rRNA + S-adenosyl-L-homocysteine + H(+). Specifically methylates the guanosine in position 1516 of 16S rRNA. This chain is Ribosomal RNA small subunit methyltransferase J, found in Mannheimia succiniciproducens (strain KCTC 0769BP / MBEL55E).